Here is a 931-residue protein sequence, read N- to C-terminus: Kinesin heavy chain (931 aa).

Positions 6–329 constitute a Kinesin motor domain; the sequence is SIKVVARFRP…LRFGMRAKSI (324 aa). Residues 87–94 and 237–244 each bind ATP; these read GQTGAGKS and GSEKVGKT. Residues 342–864 are a coiled coil; that stretch reads AELKSLLKKA…VKERLELAKA (523 aa). Disordered regions lie at residues 388-465 and 886-931; these read TTDA…EKQL and AKPL…FTKS. Residues 402 to 419 show a composition bias toward polar residues; it reads STRPSTPSLISDSRSETP. Basic and acidic residues predominate over residues 432 to 456; the sequence is LDKDEREEFLRRENELQDQISEKES. Polar residues predominate over residues 902–931; the sequence is PTIQNLQGQNEGNTSSGSSSKRASWFFTKS.

It belongs to the TRAFAC class myosin-kinesin ATPase superfamily. Kinesin family. Kinesin subfamily.

It localises to the cytoplasm. The protein resides in the cytoskeleton. In terms of biological role, kinesin is a microtubule-associated force-producing protein that may play a role in organelle transport. Its motor activity is directed toward the microtubule's plus end. This is Kinesin heavy chain (KLP1) from Gibberella moniliformis (Maize ear and stalk rot fungus).